The sequence spans 272 residues: Cell division protein DivIB (272 aa).

The Cytoplasmic segment spans residues 1–21 (MRLSSHGKKTVSTSNNPVFNR). The helical transmembrane segment at 22-42 (IGLFFTAAILFALFLQMLFFL) threads the bilayer. The 73-residue stretch at 43–115 (RPWQDIKETK…GTAIIRVNEN (73 aa)) folds into the POTRA domain. The Extracellular segment spans residues 43 to 272 (RPWQDIKETK…SSSKSSNSSK (230 aa)). Positions 253–272 (LSSLSSDKSKSSSKSSNSSK) are disordered.

This sequence belongs to the FtsQ/DivIB family. DivIB subfamily.

The protein resides in the cell membrane. Its function is as follows. Cell division protein that may be involved in stabilizing or promoting the assembly of the division complex. The chain is Cell division protein DivIB from Oenococcus oeni (strain ATCC BAA-331 / PSU-1).